Here is a 903-residue protein sequence, read N- to C-terminus: Centrobin (903 aa).

A compositionally biased stretch (polar residues) spans 1 to 10; the sequence is MATSADSPSS. Residues 1 to 34 form a disordered region; that stretch reads MATSADSPSSPLGAEDLLSDSSEPPGLNQVSSEV. Residue S80 is modified to Phosphoserine. Disordered stretches follow at residues 110–140, 471–493, 568–597, 669–704, 772–799, and 837–903; these read LQTSRDTAYRDPLIPGAGSERREEDSFDSDS, LRQAASLREHHRKQLQDLSGQHQ, LSTTLPPPNPPAPPAGPSSPGPQEPEKEER, SALGAFHPDHRAERPFPEEDPGPDGEGLLKQGLPPA, RVPEPPSSHSQGSGPSSGSPERGGDGLT, and SGTD…GVWR. The stretch at 196–560 forms a coiled coil; the sequence is RRKHCERHIQ…ERLQAMLQAH (365 aa). The segment at 365-903 is required for centrosome localization; the sequence is QEHQLKEHYQ…SMRSRGGVWR (539 aa). Pro residues predominate over residues 572–590; that stretch reads LPPPNPPAPPAGPSSPGPQ. Over residues 675 to 685 the composition is skewed to basic and acidic residues; sequence HPDHRAERPFP. Low complexity predominate over residues 778–791; sequence SSHSQGSGPSSGSP. S790 bears the Phosphoserine mark. The segment covering 837-863 has biased composition (basic and acidic residues); it reads SGTDGRGDNVPRRNTDSRLGEIPRKEI.

Interacts with LYST. In terms of tissue distribution, widely expressed (at protein level). Highly expressed in testis. Also expressed in spleen, thymus, prostate, small intestine, colon and peripheral blood leukocytes.

It is found in the cytoplasm. The protein localises to the cytoskeleton. The protein resides in the microtubule organizing center. It localises to the centrosome. Its subcellular location is the centriole. Required for centriole duplication. Inhibition of centriole duplication leading to defects in cytokinesis. This chain is Centrobin (CNTROB), found in Homo sapiens (Human).